Reading from the N-terminus, the 234-residue chain is Adenosine 5'-phosphosulfate reductase (234 aa).

Cysteine 120, cysteine 121, cysteine 203, and cysteine 206 together coordinate [4Fe-4S] cluster. Residue cysteine 229 is the Nucleophile; cysteine thiosulfonate intermediate of the active site.

The protein belongs to the PAPS reductase family. CysH subfamily. [4Fe-4S] cluster is required as a cofactor.

It is found in the cytoplasm. The enzyme catalyses [thioredoxin]-disulfide + sulfite + AMP + 2 H(+) = adenosine 5'-phosphosulfate + [thioredoxin]-dithiol. The protein operates within sulfur metabolism; hydrogen sulfide biosynthesis; sulfite from sulfate. In terms of biological role, catalyzes the formation of sulfite from adenosine 5'-phosphosulfate (APS) using thioredoxin as an electron donor. In Bacillus cereus (strain ATCC 14579 / DSM 31 / CCUG 7414 / JCM 2152 / NBRC 15305 / NCIMB 9373 / NCTC 2599 / NRRL B-3711), this protein is Adenosine 5'-phosphosulfate reductase.